The primary structure comprises 366 residues: Chorismate synthase (366 aa).

2 residues coordinate NADP(+): Arg48 and Arg54. FMN is bound by residues 131 to 133 (RAS), 243 to 244 (NA), Gly288, 303 to 307 (KPTPS), and Arg329.

It belongs to the chorismate synthase family. Homotetramer. Requires FMNH2 as cofactor.

The enzyme catalyses 5-O-(1-carboxyvinyl)-3-phosphoshikimate = chorismate + phosphate. Its pathway is metabolic intermediate biosynthesis; chorismate biosynthesis; chorismate from D-erythrose 4-phosphate and phosphoenolpyruvate: step 7/7. Functionally, catalyzes the anti-1,4-elimination of the C-3 phosphate and the C-6 proR hydrogen from 5-enolpyruvylshikimate-3-phosphate (EPSP) to yield chorismate, which is the branch point compound that serves as the starting substrate for the three terminal pathways of aromatic amino acid biosynthesis. This reaction introduces a second double bond into the aromatic ring system. This is Chorismate synthase from Bartonella quintana (strain Toulouse) (Rochalimaea quintana).